A 648-amino-acid polypeptide reads, in one-letter code: Putative potassium transport protein DDB_G0292412 (648 aa).

Residues 48-68 form a helical membrane-spanning segment; sequence LFLLVILVQLGSTVLLTLPIV. An N-linked (GlcNAc...) asparagine glycan is attached at Asn81. 2 disordered regions span residues 106–145 and 223–261; these read HDFK…DDND and QQQQ…DSQS. Residues 110–129 show a composition bias toward acidic residues; the sequence is DDDDENDNNNNEENDDNDDE. Residues 199 to 227 adopt a coiled-coil conformation; that stretch reads IIQQQQQQQQQQQQQQQQQQQQQQQQQQQ. Residues Asn239, Asn243, Asn247, Asn248, Asn254, and Asn257 are each glycosylated (N-linked (GlcNAc...) asparagine). 6 helical membrane passes run 313–333, 353–373, 385–405, 443–463, 472–491, and 505–525; these read LLVI…ISIG, GWWW…LALF, FLLI…PVFL, VQLF…MALL, NMNY…STRT, and SVLL…IISL. N-linked (GlcNAc...) asparagine glycosylation occurs at Asn536. Helical transmembrane passes span 550–570, 571–591, and 592–612; these read IFVP…LLES, GVIT…NVGL, and SISI…MLAG.

This sequence belongs to the TrkH potassium transport family.

The protein localises to the membrane. Functionally, may function as a potassium transporter. The polypeptide is Putative potassium transport protein DDB_G0292412 (Dictyostelium discoideum (Social amoeba)).